Here is a 184-residue protein sequence, read N- to C-terminus: Rubrerythrin-2 (184 aa).

Positions Ser2–Lys146 constitute a Ferritin-like diiron domain. Residues Glu19, Glu52, Glu94, Glu97, Glu128, His131, Cys156, Cys159, Cys171, and Cys174 each contribute to the Fe(3+) site. The Rubredoxin-like domain maps to Gly151–Phe184.

Fe(3+) is required as a cofactor.

It catalyses the reaction H2O2 + NADH + H(+) = NAD(+) + 2 H2O. Its activity is regulated as follows. Rubredoxin (Rd) increases the NADH consumption rate by serving as an intermediary electron-transfer shuttle between NROR and Rbr2. Functionally, functions as the terminal component of an NADH peroxidase (NADH:H(2)O(2) oxidoreductase) when using NADH:rubredoxin oxidoreductase (NROR) as the electron transport intermediary from NADH to Rbr2. The sequence is that of Rubrerythrin-2 (rbr2) from Clostridium acetobutylicum (strain ATCC 824 / DSM 792 / JCM 1419 / IAM 19013 / LMG 5710 / NBRC 13948 / NRRL B-527 / VKM B-1787 / 2291 / W).